The chain runs to 61 residues: Small ribosomal subunit protein uS14 (61 aa).

Zn(2+)-binding residues include C24, C27, C40, and C43.

The protein belongs to the universal ribosomal protein uS14 family. Zinc-binding uS14 subfamily. In terms of assembly, part of the 30S ribosomal subunit. Contacts proteins S3 and S10. Requires Zn(2+) as cofactor.

Functionally, binds 16S rRNA, required for the assembly of 30S particles and may also be responsible for determining the conformation of the 16S rRNA at the A site. The sequence is that of Small ribosomal subunit protein uS14 from Sulfurovum sp. (strain NBC37-1).